We begin with the raw amino-acid sequence, 196 residues long: Nucleoside triphosphate pyrophosphatase (196 aa).

The active-site Proton acceptor is Asp-73.

It belongs to the Maf family. A divalent metal cation is required as a cofactor.

It is found in the cytoplasm. It catalyses the reaction a ribonucleoside 5'-triphosphate + H2O = a ribonucleoside 5'-phosphate + diphosphate + H(+). The enzyme catalyses a 2'-deoxyribonucleoside 5'-triphosphate + H2O = a 2'-deoxyribonucleoside 5'-phosphate + diphosphate + H(+). Its function is as follows. Nucleoside triphosphate pyrophosphatase. May have a dual role in cell division arrest and in preventing the incorporation of modified nucleotides into cellular nucleic acids. In Anaplasma marginale (strain St. Maries), this protein is Nucleoside triphosphate pyrophosphatase.